The chain runs to 79 residues: MALSGLQRQVIHFYRRCLHAAKAKEQPYNERWMAFVHQEFRKNQTISKRDFFYIEHLLRVGQRQYEAYSRPEVKDIHFS.

It belongs to the complex I LYR family. SDHAF1 subfamily. Interacts with sdh2 within an sdh1-sdh2 subcomplex.

Its subcellular location is the mitochondrion matrix. Functionally, plays an essential role in the assembly of succinate dehydrogenase (SDH), an enzyme complex (also referred to as respiratory complex II) that is a component of both the tricarboxylic acid (TCA) cycle and the mitochondrial electron transport chain, and which couples the oxidation of succinate to fumarate with the reduction of ubiquinone (coenzyme Q) to ubiquinol. Promotes maturation of the iron-sulfur protein subunit sdh2 of the SDH catalytic dimer, protecting it from the deleterious effects of oxidants. May act together with SDHAF3. The protein is Succinate dehydrogenase assembly factor 1, mitochondrial of Schizosaccharomyces pombe (strain 972 / ATCC 24843) (Fission yeast).